The primary structure comprises 65 residues: Large ribosomal subunit protein bL32 (65 aa).

Residues 1-19 (MAVQKSRKTPSKRGMRRSH) are compositionally biased toward basic residues. The segment at 1–32 (MAVQKSRKTPSKRGMRRSHNALVKSTLSEDQE) is disordered.

It belongs to the bacterial ribosomal protein bL32 family.

The chain is Large ribosomal subunit protein bL32 from Vesicomyosocius okutanii subsp. Calyptogena okutanii (strain HA).